Consider the following 453-residue polypeptide: Zinc finger and BTB domain-containing protein 44 (453 aa).

Residue K4 forms a Glycyl lysine isopeptide (Lys-Gly) (interchain with G-Cter in SUMO2) linkage. Residues 31–98 (CDITIRVQDK…AYTATLSINT (68 aa)) enclose the BTB domain. The residue at position 135 (S135) is a Phosphoserine. The tract at residues 135–157 (SQPEKSLDAGQENSSNCNFTSRD) is disordered. Positions 145-157 (QENSSNCNFTSRD) are enriched in polar residues. A phosphoserine mark is found at S159, S161, S165, S191, S194, and S199. T200 bears the Phosphothreonine mark. Residues 241-266 (QPEKAKQAENTRTLELPGPSEAGRRV) form a disordered region. K290 participates in a covalent cross-link: Glycyl lysine isopeptide (Lys-Gly) (interchain with G-Cter in SUMO2). 2 disordered regions span residues 295–324 (SDEE…PGSE) and 336–366 (SSSI…ADDD). Over residues 304-318 (SQPVSASQSSLSDQQ) the composition is skewed to low complexity. Residues 352–361 (TLQSTSSTNA) are compositionally biased toward polar residues. C2H2-type zinc fingers lie at residues 399–421 (FQCP…MLIH) and 427–449 (FQCD…RLKH).

It localises to the nucleus. The sequence is that of Zinc finger and BTB domain-containing protein 44 (Zbtb44) from Mus musculus (Mouse).